A 574-amino-acid chain; its full sequence is Glycine--tRNA ligase (574 aa).

Substrate-binding residues include Arg-96 and Glu-162. Residues 194–196 (RNE), 204–209 (IRLREF), 327–328 (EC), and 450–453 (GIDR) each bind ATP. Residue 209–213 (FTQAE) coordinates substrate. Residue 446–450 (EPSYG) coordinates substrate.

This sequence belongs to the class-II aminoacyl-tRNA synthetase family.

The protein localises to the cytoplasm. It catalyses the reaction tRNA(Gly) + glycine + ATP = glycyl-tRNA(Gly) + AMP + diphosphate. In terms of biological role, catalyzes the attachment of glycine to tRNA(Gly). The sequence is that of Glycine--tRNA ligase from Methanococcus maripaludis (strain C6 / ATCC BAA-1332).